The chain runs to 501 residues: Bifunctional purine biosynthesis protein PurH (501 aa).

Positions methionine 1–serine 144 constitute an MGS-like domain.

The protein belongs to the PurH family.

The enzyme catalyses (6R)-10-formyltetrahydrofolate + 5-amino-1-(5-phospho-beta-D-ribosyl)imidazole-4-carboxamide = 5-formamido-1-(5-phospho-D-ribosyl)imidazole-4-carboxamide + (6S)-5,6,7,8-tetrahydrofolate. It catalyses the reaction IMP + H2O = 5-formamido-1-(5-phospho-D-ribosyl)imidazole-4-carboxamide. Its pathway is purine metabolism; IMP biosynthesis via de novo pathway; 5-formamido-1-(5-phospho-D-ribosyl)imidazole-4-carboxamide from 5-amino-1-(5-phospho-D-ribosyl)imidazole-4-carboxamide (10-formyl THF route): step 1/1. It participates in purine metabolism; IMP biosynthesis via de novo pathway; IMP from 5-formamido-1-(5-phospho-D-ribosyl)imidazole-4-carboxamide: step 1/1. The sequence is that of Bifunctional purine biosynthesis protein PurH from Clostridium perfringens (strain ATCC 13124 / DSM 756 / JCM 1290 / NCIMB 6125 / NCTC 8237 / Type A).